The primary structure comprises 226 residues: UPF0173 metal-dependent hydrolase TM_1162 (226 aa).

It belongs to the UPF0173 family.

The sequence is that of UPF0173 metal-dependent hydrolase TM_1162 from Thermotoga maritima (strain ATCC 43589 / DSM 3109 / JCM 10099 / NBRC 100826 / MSB8).